The sequence spans 147 residues: Hemoglobin subunit gamma (147 aa).

Residues 3-147 form the Globin domain; it reads NFTAEDKAAI…VASALASRYH (145 aa). Heme b-binding residues include His64 and His93.

This sequence belongs to the globin family. Heterotetramer of two alpha chains and two gamma chains in fetal hemoglobin (Hb F). Red blood cells.

Gamma chains make up the fetal hemoglobin F, in combination with alpha chains. The protein is Hemoglobin subunit gamma (HBG) of Alouatta seniculus (Red howler monkey).